The sequence spans 398 residues: 1-deoxy-D-xylulose 5-phosphate reductoisomerase (398 aa).

Residues T10, G11, S12, I13, K37, N38, and N124 each contribute to the NADPH site. K125 lines the 1-deoxy-D-xylulose 5-phosphate pocket. An NADPH-binding site is contributed by E126. D150 provides a ligand contact to Mn(2+). Residues S151, E152, S186, and H209 each coordinate 1-deoxy-D-xylulose 5-phosphate. Position 152 (E152) interacts with Mn(2+). G215 provides a ligand contact to NADPH. Residues S222, N227, K228, and E231 each coordinate 1-deoxy-D-xylulose 5-phosphate. E231 serves as a coordination point for Mn(2+).

This sequence belongs to the DXR family. In terms of assembly, homodimer. It depends on Mg(2+) as a cofactor. Mn(2+) is required as a cofactor.

It carries out the reaction 2-C-methyl-D-erythritol 4-phosphate + NADP(+) = 1-deoxy-D-xylulose 5-phosphate + NADPH + H(+). It functions in the pathway isoprenoid biosynthesis; isopentenyl diphosphate biosynthesis via DXP pathway; isopentenyl diphosphate from 1-deoxy-D-xylulose 5-phosphate: step 1/6. Its function is as follows. Catalyzes the NADPH-dependent rearrangement and reduction of 1-deoxy-D-xylulose-5-phosphate (DXP) to 2-C-methyl-D-erythritol 4-phosphate (MEP). This is 1-deoxy-D-xylulose 5-phosphate reductoisomerase from Buchnera aphidicola subsp. Acyrthosiphon pisum (strain 5A).